Reading from the N-terminus, the 275-residue chain is Large ribosomal subunit protein uL2 (275 aa).

Residues 224–275 form a disordered region; the sequence is VMNPVDHPHGGGEGKSPIGRPSPVTPWGKPTLGYKTRKKNKASDKFIIKRRK. The segment covering 264 to 275 has biased composition (basic and acidic residues); that stretch reads KASDKFIIKRRK.

The protein belongs to the universal ribosomal protein uL2 family. In terms of assembly, part of the 50S ribosomal subunit. Forms a bridge to the 30S subunit in the 70S ribosome.

Functionally, one of the primary rRNA binding proteins. Required for association of the 30S and 50S subunits to form the 70S ribosome, for tRNA binding and peptide bond formation. It has been suggested to have peptidyltransferase activity; this is somewhat controversial. Makes several contacts with the 16S rRNA in the 70S ribosome. This chain is Large ribosomal subunit protein uL2, found in Acetivibrio thermocellus (strain ATCC 27405 / DSM 1237 / JCM 9322 / NBRC 103400 / NCIMB 10682 / NRRL B-4536 / VPI 7372) (Clostridium thermocellum).